Reading from the N-terminus, the 175-residue chain is Nucleoside triphosphate/diphosphate phosphatase (175 aa).

The active-site Proton donor is the R23. Positions 87, 103, 105, 107, 120, and 123 each coordinate Mg(2+).

It belongs to the Ntdp family. Mg(2+) serves as cofactor.

It catalyses the reaction a ribonucleoside 5'-triphosphate + H2O = a ribonucleoside 5'-diphosphate + phosphate + H(+). The catalysed reaction is a ribonucleoside 5'-diphosphate + H2O = a ribonucleoside 5'-phosphate + phosphate + H(+). In terms of biological role, has nucleoside phosphatase activity towards nucleoside triphosphates and nucleoside diphosphates. This chain is Nucleoside triphosphate/diphosphate phosphatase, found in Oceanobacillus iheyensis (strain DSM 14371 / CIP 107618 / JCM 11309 / KCTC 3954 / HTE831).